The chain runs to 250 residues: 5-oxoprolinase subunit A (250 aa).

This sequence belongs to the LamB/PxpA family. In terms of assembly, forms a complex composed of PxpA, PxpB and PxpC.

It catalyses the reaction 5-oxo-L-proline + ATP + 2 H2O = L-glutamate + ADP + phosphate + H(+). Functionally, catalyzes the cleavage of 5-oxoproline to form L-glutamate coupled to the hydrolysis of ATP to ADP and inorganic phosphate. This chain is 5-oxoprolinase subunit A, found in Nocardia farcinica (strain IFM 10152).